The chain runs to 89 residues: Putative regulatory protein Nther_1328 (89 aa).

This sequence belongs to the RemA family.

The sequence is that of Putative regulatory protein Nther_1328 from Natranaerobius thermophilus (strain ATCC BAA-1301 / DSM 18059 / JW/NM-WN-LF).